A 239-amino-acid chain; its full sequence is Ribosomal RNA small subunit methyltransferase G (239 aa).

Residues Gly77, Phe82, 128–129, and Arg146 each bind S-adenosyl-L-methionine; that span reads AE. The disordered stretch occupies residues 215–239; sequence DKKRQTPKKYPRKPGTPNKTPLLEK.

It belongs to the methyltransferase superfamily. RNA methyltransferase RsmG family.

The protein resides in the cytoplasm. In terms of biological role, specifically methylates the N7 position of guanine in position 535 of 16S rRNA. This Staphylococcus aureus (strain USA300) protein is Ribosomal RNA small subunit methyltransferase G.